We begin with the raw amino-acid sequence, 429 residues long: UDP-N-acetylglucosamine 1-carboxyvinyltransferase (429 aa).

22–23 contributes to the phosphoenolpyruvate binding site; it reads KN. Arg102 lines the UDP-N-acetyl-alpha-D-glucosamine pocket. Cys126 (proton donor) is an active-site residue. Residue Cys126 is modified to 2-(S-cysteinyl)pyruvic acid O-phosphothioketal. UDP-N-acetyl-alpha-D-glucosamine is bound by residues 131–135, Asp316, and Ile338; that span reads RPVDL.

It belongs to the EPSP synthase family. MurA subfamily.

It is found in the cytoplasm. It catalyses the reaction phosphoenolpyruvate + UDP-N-acetyl-alpha-D-glucosamine = UDP-N-acetyl-3-O-(1-carboxyvinyl)-alpha-D-glucosamine + phosphate. Its pathway is cell wall biogenesis; peptidoglycan biosynthesis. Functionally, cell wall formation. Adds enolpyruvyl to UDP-N-acetylglucosamine. The polypeptide is UDP-N-acetylglucosamine 1-carboxyvinyltransferase (Nitrobacter winogradskyi (strain ATCC 25391 / DSM 10237 / CIP 104748 / NCIMB 11846 / Nb-255)).